Reading from the N-terminus, the 246-residue chain is DNA repair protein RecO (246 aa).

This sequence belongs to the RecO family.

Functionally, involved in DNA repair and RecF pathway recombination. This Maridesulfovibrio salexigens (strain ATCC 14822 / DSM 2638 / NCIMB 8403 / VKM B-1763) (Desulfovibrio salexigens) protein is DNA repair protein RecO.